The sequence spans 92 residues: Acylphosphatase (92 aa).

The Acylphosphatase-like domain occupies 5–92; sequence CIAAYVYGVV…TPFETFKIRY (88 aa). Active-site residues include R20 and N38.

It belongs to the acylphosphatase family.

The catalysed reaction is an acyl phosphate + H2O = a carboxylate + phosphate + H(+). The polypeptide is Acylphosphatase (acyP) (Yersinia enterocolitica serotype O:8 / biotype 1B (strain NCTC 13174 / 8081)).